The primary structure comprises 310 residues: MSTIEKHTQIVKKTASKLGFDYCGIAEATFLEEEAPKLENWLNKNYHGKMAYMANHFDKRLDPRKLVEGAKSVVSLMFNYYPQQNLDESRNALKIAKYAYGEDYHFVIKDKLKEFLKCLKEEIGEVHGRVFVDSAPVMERQWAVKAGLGWKGKNSLLLNKSSGSFFFLAELIIDLPLIYDNPSDKDYCGTCTRCVDACPTDAILQDNLIDGSKCISYLTIELKEAIPDDFKGKMENWVFGCDICQDVCPWNRFSKPHKEEAFLPHADLEKSAWEEMTKETFNKVFKRSALKRTKWEGFQRNIHFVKNEAS.

Aspartate 133 functions as the Proton donor in the catalytic mechanism. The 4Fe-4S ferredoxin-type domain occupies 179 to 208; it reads YDNPSDKDYCGTCTRCVDACPTDAILQDNL. Residues cysteine 188, cysteine 191, cysteine 194, cysteine 198, cysteine 214, cysteine 241, cysteine 244, and cysteine 248 each coordinate [4Fe-4S] cluster.

The protein belongs to the QueG family. Monomer. Cob(II)alamin serves as cofactor. [4Fe-4S] cluster is required as a cofactor.

It localises to the cytoplasm. The catalysed reaction is epoxyqueuosine(34) in tRNA + AH2 = queuosine(34) in tRNA + A + H2O. It functions in the pathway tRNA modification; tRNA-queuosine biosynthesis. In terms of biological role, catalyzes the conversion of epoxyqueuosine (oQ) to queuosine (Q), which is a hypermodified base found in the wobble positions of tRNA(Asp), tRNA(Asn), tRNA(His) and tRNA(Tyr). The chain is Epoxyqueuosine reductase from Cyclobacterium marinum (strain ATCC 25205 / DSM 745 / LMG 13164 / NCIMB 1802) (Flectobacillus marinus).